The following is a 256-amino-acid chain: Ribosomal RNA small subunit methyltransferase A (256 aa).

6 residues coordinate S-adenosyl-L-methionine: histidine 12, leucine 14, glycine 39, glutamate 60, aspartate 81, and asparagine 103.

This sequence belongs to the class I-like SAM-binding methyltransferase superfamily. rRNA adenine N(6)-methyltransferase family. RsmA subfamily.

The protein localises to the cytoplasm. The enzyme catalyses adenosine(1518)/adenosine(1519) in 16S rRNA + 4 S-adenosyl-L-methionine = N(6)-dimethyladenosine(1518)/N(6)-dimethyladenosine(1519) in 16S rRNA + 4 S-adenosyl-L-homocysteine + 4 H(+). In terms of biological role, specifically dimethylates two adjacent adenosines (A1518 and A1519) in the loop of a conserved hairpin near the 3'-end of 16S rRNA in the 30S particle. May play a critical role in biogenesis of 30S subunits. This Methylibium petroleiphilum (strain ATCC BAA-1232 / LMG 22953 / PM1) protein is Ribosomal RNA small subunit methyltransferase A.